A 443-amino-acid polypeptide reads, in one-letter code: Chromosome partition protein MukF (443 aa).

The tract at residues 209–237 (LDETSINLRELQDTLNAAGDKLQSQLLRI) is leucine-zipper.

It belongs to the MukF family. In terms of assembly, interacts, and probably forms a ternary complex, with MukE and MukB via its C-terminal region. The complex formation is stimulated by calcium or magnesium. It is required for an interaction between MukE and MukB.

Its subcellular location is the cytoplasm. The protein localises to the nucleoid. Functionally, involved in chromosome condensation, segregation and cell cycle progression. May participate in facilitating chromosome segregation by condensation DNA from both sides of a centrally located replisome during cell division. Not required for mini-F plasmid partitioning. Probably acts via its interaction with MukB and MukE. Overexpression results in anucleate cells. It has a calcium binding activity. In Haemophilus ducreyi (strain 35000HP / ATCC 700724), this protein is Chromosome partition protein MukF.